We begin with the raw amino-acid sequence, 227 residues long: UPF0758 protein SSA_1218 (227 aa).

Residues 104 to 226 form the MPN domain; that stretch reads QIMGSQKLAR…YYSYREETDM (123 aa). Zn(2+)-binding residues include His175, His177, and Asp188. The JAMM motif motif lies at 175–188; the sequence is HNHPSGSVVPSRND.

The protein belongs to the UPF0758 family.

The polypeptide is UPF0758 protein SSA_1218 (Streptococcus sanguinis (strain SK36)).